Reading from the N-terminus, the 267-residue chain is MITIKIGGSVVDDLHPSTIADIKKIAESEGVILVHGGGKEVTKVCEQLGKEPKFVTSPSGIKSRYTDKETAEIFTMVMSGRINKTIVQMLQKNGINAIGLSGVDAKVIEADRKKKLLIVNEKGRKQAIDGGYTGKIREVNASFIKSLLDQGLTPVISPIAISEESEFLNVDGDRAAAYVAGKVGSDKVLFITNVDGLLMDDKVVPKLTLAEAKEIRPKIGPGMEKKILASTEALDMGVTTALIANGQKENPISSAISHDNCTVIEHE.

Substrate-binding positions include 37–38 (GG), Arg64, and Asn169.

This sequence belongs to the acetylglutamate kinase family. LysZ subfamily.

It localises to the cytoplasm. The catalysed reaction is [amino-group carrier protein]-C-terminal-N-(1,4-dicarboxybutan-1-yl)-L-glutamine + ATP = [amino-group carrier protein]-C-terminal-N-(1-carboxy-5-phosphooxy-5-oxopentan-1-yl)-L-glutamine + ADP. The enzyme catalyses [amino-group carrier protein]-C-terminal-gamma-(L-glutamyl)-L-glutamate + ATP = [amino-group carrier protein]-C-terminal-gamma-(5-phospho-L-glutamyl)-L-glutamate + ADP. The protein operates within amino-acid biosynthesis; L-lysine biosynthesis via AAA pathway; L-lysine from L-alpha-aminoadipate (Thermus route): step 2/5. It participates in amino-acid biosynthesis; L-arginine biosynthesis. Involved in both the arginine and lysine biosynthetic pathways. Phosphorylates the LysW-bound precursors glutamate (for arginine biosynthesis), respectively alpha-aminoadipate (for lysine biosynthesis). The polypeptide is Putative [LysW]-aminoadipate/[LysW]-glutamate kinase (Nitrosopumilus maritimus (strain SCM1)).